The primary structure comprises 252 residues: Pimeloyl-[acyl-carrier protein] methyl ester esterase (252 aa).

Residues 15–239 (LVMLHGWAMH…FPHCGHAPFL (225 aa)) form the AB hydrolase-1 domain. Residues W21, 81–82 (SL), and 143–147 (FLTLQ) contribute to the substrate site. S81 acts as the Nucleophile in catalysis. Residues D207 and H235 contribute to the active site. H235 is a substrate binding site.

This sequence belongs to the AB hydrolase superfamily. Carboxylesterase BioH family. As to quaternary structure, monomer.

Its subcellular location is the cytoplasm. The catalysed reaction is 6-carboxyhexanoyl-[ACP] methyl ester + H2O = 6-carboxyhexanoyl-[ACP] + methanol + H(+). Its pathway is cofactor biosynthesis; biotin biosynthesis. The physiological role of BioH is to remove the methyl group introduced by BioC when the pimeloyl moiety is complete. It allows to synthesize pimeloyl-ACP via the fatty acid synthetic pathway through the hydrolysis of the ester bonds of pimeloyl-ACP esters. The polypeptide is Pimeloyl-[acyl-carrier protein] methyl ester esterase (Nitrosomonas europaea (strain ATCC 19718 / CIP 103999 / KCTC 2705 / NBRC 14298)).